The chain runs to 260 residues: Exosome complex component Rrp4 (260 aa).

Positions 59–128 constitute an S1 motif domain; that stretch reads NDVVIGIVIV…NSMKVELALR (70 aa). Residues 136 to 194 enclose the KH domain; it reads KTGQIVEVEPVKVPRVIGHGGSMISMLKKETNCSIFVGQNGRIWIDGKDDDVELLSKAL.

The protein belongs to the RRP4 family. As to quaternary structure, component of the archaeal exosome complex. Forms a trimer of Rrp4 and/or Csl4 subunits. The trimer associates with a hexameric ring-like arrangement composed of 3 Rrp41-Rrp42 heterodimers.

Its subcellular location is the cytoplasm. Its function is as follows. Non-catalytic component of the exosome, which is a complex involved in RNA degradation. Increases the RNA binding and the efficiency of RNA degradation. Confers strong poly(A) specificity to the exosome. This chain is Exosome complex component Rrp4, found in Methanosarcina barkeri (strain Fusaro / DSM 804).